We begin with the raw amino-acid sequence, 49 residues long: Large ribosomal subunit protein bL33B (49 aa).

It belongs to the bacterial ribosomal protein bL33 family.

In Bacillus pumilus (strain SAFR-032), this protein is Large ribosomal subunit protein bL33B.